A 161-amino-acid chain; its full sequence is V-type proton ATPase 16 kDa proteolipid subunit c 2 (161 aa).

Over 1-15 (MSYDLETAERAAYAP) the chain is Lumenal. Residues 16 to 36 (FFGYMGAASAQIFTVLGAAYG) form a helical membrane-spanning segment. At 37–58 (TAKSAVGICSMGVMRPELIMKS) the chain is on the cytoplasmic side. Residues 59 to 79 (VIPVIMAGIIGIYGLVVAMVL) traverse the membrane as a helical segment. At 80–98 (KGKVTSASAGYDLNKGFAH) the chain is on the lumenal side. Residues 99–119 (LAAGLTCGLCGLGAGYAIGIV) traverse the membrane as a helical segment. Topologically, residues 120 to 137 (GDAGVRGTAQQPRLFVGM) are cytoplasmic. Residues 138-158 (ILILIFSEVLGLYGMIVALIL) traverse the membrane as a helical segment. Residues 159-161 (GTS) are Lumenal-facing.

This sequence belongs to the V-ATPase proteolipid subunit family. As to quaternary structure, V-ATPase is a heteromultimeric enzyme made up of two complexes: the ATP-hydrolytic V1 complex and the proton translocation V0 complex. The V1 complex consists of three catalytic AB heterodimers that form a heterohexamer, three peripheral stalks each consisting of EG heterodimers, one central rotor including subunits D and F, and the regulatory subunits C and H. The proton translocation complex V0 consists of the proton transport subunit a, a ring of proteolipid subunits c9c'', rotary subunit d, subunits e and f, and the accessory subunits vah-19/Ac45 and vah-20/PRR. In terms of tissue distribution, expressed in the H-shaped excretory cell, rectum, and a pair of cells posterior to the anus.

It localises to the membrane. Functionally, proton-conducting pore forming subunit of the V0 complex of vacuolar(H+)-ATPase (V-ATPase), a multisubunit enzyme composed of a peripheral complex (V1) that hydrolyzes ATP and a membrane integral complex (V0) that translocates protons. V-ATPase is responsible for acidifying and maintaining the pH of intracellular compartments and in some cell types, is targeted to the plasma membrane, where it is responsible for acidifying the extracellular environment. Involved in necrotic cell death. Required along with other vacuolar ATPase components for the removal of protein aggregates which form in immature oocytes in the distal gonad. This removal occurs as the oocytes mature and move to the proximal gonad, is triggered by the introduction of sperm through mating and occurs before fertilization. The introduction of sperm triggers V-ATPase accumulation in proximal oocytes and induces lysosomal acidification which leads to engulfing of protein aggregates by lysosomes and subsequent clearance of the aggregates. Lysosomal acidification also leads to changes in mitochondrial morphology and function. Mitochondria in distal immature oocytes are fragmented, produce high levels of reactive oxygen species (ROS) and have high membrane potential, indicative of metabolic inactivity. In contrast, mitochondria in proximal mature oocytes are tubular with lower ROS levels and membrane potential, indicative of an active metabolic state required for aggregate mobilization before clearance. The polypeptide is V-type proton ATPase 16 kDa proteolipid subunit c 2 (Caenorhabditis elegans).